Here is a 359-residue protein sequence, read N- to C-terminus: Protein trichome birefringence-like 42 (359 aa).

The chain crosses the membrane as a helical; Signal-anchor for type II membrane protein span at residues 7 to 25; sequence LFLLLLIFLVDLSDYGVLA. The GDS motif motif lies at 110 to 112; the sequence is GDS. The short motif at 335–349 is the DCXHWCLPGXXDXWN motif element; the sequence is DCSHWCLPGVPDAWN.

It belongs to the PC-esterase family. TBL subfamily.

Its subcellular location is the membrane. In terms of biological role, may act as a bridging protein that binds pectin and other cell wall polysaccharides. Probably involved in maintaining esterification of pectins. May be involved in the specific O-acetylation of cell wall polymers. The chain is Protein trichome birefringence-like 42 (TBL42) from Arabidopsis thaliana (Mouse-ear cress).